The following is a 299-amino-acid chain: Probable tyrosine phosphatase protein J4 (299 aa).

Residues 16 to 289 (VEALDFLSFM…VYCYQALYVW (274 aa)) form the Tyrosine-protein phosphatase domain. The active-site Phosphocysteine intermediate is C230.

It belongs to the protein-tyrosine phosphatase family.

It carries out the reaction O-phospho-L-tyrosyl-[protein] + H2O = L-tyrosyl-[protein] + phosphate. The sequence is that of Probable tyrosine phosphatase protein J4 (J5) from Microplitis demolitor bracovirus (isolate Webb) (MdBV).